Reading from the N-terminus, the 132-residue chain is NLP effector protein 15 (132 aa).

The Conserved undecapeptide motif I signature appears at methionine 1–aspartate 9. Positions glycine 16–glutamate 22 match the Hepta-peptide GHRHDWE motif II motif.

This sequence belongs to the Necrosis inducing protein (NPP1) family.

The protein localises to the secreted. Functionally, secreted effector that contributes moderately to virulence during infection by P.capsici. Causes only small yellow areas at 3 days after inoculation of host C.annuum leaves; these areas expand somewhat and became necrotic at 7 days after inoculation. Leads only to chlorotic areas, without necrosis at 7 days after non-host N.benthamiana leaves infection. In Phytophthora capsici, this protein is NLP effector protein 15.